We begin with the raw amino-acid sequence, 86 residues long: Large ribosomal subunit protein uL23 (86 aa).

The protein belongs to the universal ribosomal protein uL23 family. As to quaternary structure, part of the 50S ribosomal subunit. Contacts protein L29.

Binds to 23S rRNA. One of the proteins that surrounds the polypeptide exit tunnel on the outside of the ribosome. This Caldivirga maquilingensis (strain ATCC 700844 / DSM 13496 / JCM 10307 / IC-167) protein is Large ribosomal subunit protein uL23.